The chain runs to 385 residues: Multidrug resistance protein MdtE (385 aa).

The signal sequence occupies residues 1-20 (MNRRRKLLIPLLFCGAMLTA). C21 carries N-palmitoyl cysteine lipidation. A lipid anchor (S-diacylglycerol cysteine) is attached at C21.

Belongs to the membrane fusion protein (MFP) (TC 8.A.1) family. Homotrimer. Part of the tripartite efflux system MdtEF-TolC, which is composed of an inner membrane transporter, MdtF, a membrane fusion protein, MdtE, and an outer membrane component, TolC. The complex forms a large protein conduit and can translocate molecules across both the inner and outer membranes.

The protein localises to the cell inner membrane. Functionally, part of the tripartite efflux system MdtEF-TolC, which confers resistance to compounds such as rhodamine 6G, erythromycin, doxorubicin, ethidium bromide, TPP, SDS, deoxycholate, crystal violet and benzalkonium. This chain is Multidrug resistance protein MdtE (mdtE), found in Escherichia coli (strain K12).